Reading from the N-terminus, the 227-residue chain is Ribosomal RNA large subunit methyltransferase E (227 aa).

5 residues coordinate S-adenosyl-L-methionine: Gly-78, Trp-80, Asp-103, Asp-119, and Asp-143. Residue Lys-183 is the Proton acceptor of the active site.

Belongs to the class I-like SAM-binding methyltransferase superfamily. RNA methyltransferase RlmE family.

Its subcellular location is the cytoplasm. The catalysed reaction is uridine(2552) in 23S rRNA + S-adenosyl-L-methionine = 2'-O-methyluridine(2552) in 23S rRNA + S-adenosyl-L-homocysteine + H(+). Its function is as follows. Specifically methylates the uridine in position 2552 of 23S rRNA at the 2'-O position of the ribose in the fully assembled 50S ribosomal subunit. This chain is Ribosomal RNA large subunit methyltransferase E, found in Rickettsia africae (strain ESF-5).